A 364-amino-acid polypeptide reads, in one-letter code: Gap junction delta-4 protein (364 aa).

At Met-1–Thr-19 the chain is on the cytoplasmic side. Residues Ile-20 to Ala-40 traverse the membrane as a helical segment. Topologically, residues Gly-41 to Arg-76 are extracellular. A helical transmembrane segment spans residues Phe-77–Leu-97. Over His-98–Arg-128 the chain is Cytoplasmic. A helical transmembrane segment spans residues Met-129 to Ala-149. Topologically, residues Arg-150–Ser-173 are extracellular. The chain crosses the membrane as a helical span at residues Leu-174 to Leu-194. The Cytoplasmic segment spans residues Leu-195–Val-364. A compositionally biased stretch (polar residues) spans His-331 to Lys-340. Positions His-331–Val-364 are disordered.

It belongs to the connexin family. Delta-type subfamily. As to quaternary structure, a connexon is composed of a hexamer of connexins.

It is found in the cell membrane. The protein localises to the cell junction. It localises to the gap junction. Functionally, one gap junction consists of a cluster of closely packed pairs of transmembrane channels, the connexons, through which materials of low MW diffuse from one cell to a neighboring cell. The sequence is that of Gap junction delta-4 protein (Gjd4) from Mus musculus (Mouse).